A 477-amino-acid polypeptide reads, in one-letter code: Bifunctional enzyme PyrF/PyrE (477 aa).

The OMP decarboxylase stretch occupies residues 1–273; that stretch reads MIFFDKLHQN…ITVRDVASCS (273 aa). Lys-96 functions as the Proton donor in the catalytic mechanism. An orotate phosphoribosyltransferase region spans residues 274–477; that stretch reads VWLPDVFTVK…DEQFLALTAE (204 aa). Residues Arg-374, Lys-375, Lys-378, His-380, and 400 to 408 contribute to the 5-phospho-alpha-D-ribose 1-diphosphate site; that span reads DDILISGKS.

This sequence in the N-terminal section; belongs to the OMP decarboxylase family. Type 2 subfamily. It in the C-terminal section; belongs to the purine/pyrimidine phosphoribosyltransferase family. Requires Mg(2+) as cofactor.

It carries out the reaction orotidine 5'-phosphate + H(+) = UMP + CO2. The enzyme catalyses orotidine 5'-phosphate + diphosphate = orotate + 5-phospho-alpha-D-ribose 1-diphosphate. Its pathway is pyrimidine metabolism; UMP biosynthesis via de novo pathway; UMP from orotate: step 1/2. It participates in pyrimidine metabolism; UMP biosynthesis via de novo pathway; UMP from orotate: step 2/2. Its function is as follows. Catalyzes the transfer of a ribosyl phosphate group from 5-phosphoribose 1-diphosphate to orotate, leading to the formation of orotidine monophosphate (OMP). In terms of biological role, catalyzes the decarboxylation of orotidine monophosphate (OMP) to uridine monophosphate (UMP). This chain is Bifunctional enzyme PyrF/PyrE (pyrFE), found in Nostoc sp. (strain PCC 7120 / SAG 25.82 / UTEX 2576).